A 138-amino-acid polypeptide reads, in one-letter code: Ribosome-binding factor A (138 aa).

Residues 117–138 form a disordered region; that stretch reads AEDGQHQEGPASADAKPESTEE.

This sequence belongs to the RbfA family. Monomer. Binds 30S ribosomal subunits, but not 50S ribosomal subunits or 70S ribosomes.

The protein resides in the cytoplasm. Its function is as follows. One of several proteins that assist in the late maturation steps of the functional core of the 30S ribosomal subunit. Associates with free 30S ribosomal subunits (but not with 30S subunits that are part of 70S ribosomes or polysomes). Required for efficient processing of 16S rRNA. May interact with the 5'-terminal helix region of 16S rRNA. The chain is Ribosome-binding factor A from Pseudomonas syringae pv. syringae (strain B728a).